Here is a 591-residue protein sequence, read N- to C-terminus: MSINSAMLAGVSGLIANSSALAAISDNIANVNTVGFKRSTSNFSTLVTSGNKNQTYSAGGVKAQTHQFISQQGLTQSTTSNLDISISGAGFFVTTEKPENLTATDTRSFTRAGSFQLDNLGYLRNDAGLYLQGWLADPVSGLITPDPSDLMQLASINVGSVGGTAEKTTRVGVNANLRSEQPVAAAVSYKVGTAGSPSKTNVVDSATNSHNYDVVYSSTGIANPVSGNNEYLVDIKENGVIVATGKVAYDAATNELVSSTIDYKGASPVTGSMTTTRINAAGTTVNLADLGIVNASGADDAEVVAGKLYDPSTWSMSDYAKDNSKGVKPDFEVQIPLSDSKGGQRTVTLSMLKGPGPNQWYAELRAKPGDLANNGNGQISTGIIEFTTDGKLKNTGSLFGTTSPTAITIKSSGYIAPTVTPPAVQPPTPPTWADALGIDEQEVQIDLASAAGGLTQYNSQSVVQSVNTNGTAFGNLTNIEIDEGGYVSAIFDNGVTRRIAQVAIATFSNPNGLKGVNGNAYRVTNESGTYSLKAPSQGGAGALAPSTLEASTVDLSQEFTGLITTQRAYSASSKIITTADQMLEELLNIKR.

Belongs to the flagella basal body rod proteins family.

The protein localises to the bacterial flagellum basal body. The chain is Flagellar hook protein FlgE (flgE) from Caulobacter vibrioides (strain ATCC 19089 / CIP 103742 / CB 15) (Caulobacter crescentus).